Reading from the N-terminus, the 64-residue chain is Large ribosomal subunit protein bL33c (64 aa).

Belongs to the bacterial ribosomal protein bL33 family.

It is found in the plastid. It localises to the chloroplast. The protein is Large ribosomal subunit protein bL33c of Huperzia lucidula (Shining clubmoss).